The sequence spans 124 residues: Seripauperin-3 (124 aa).

The chain crosses the membrane as a helical span at residues 7–24; it reads IAAGVAAIAAGIAAAPAT.

The protein belongs to the SRP1/TIP1 family. Seripauperin subfamily.

The protein resides in the membrane. The sequence is that of Seripauperin-3 (PAU3) from Saccharomyces cerevisiae (strain ATCC 204508 / S288c) (Baker's yeast).